We begin with the raw amino-acid sequence, 201 residues long: Holliday junction branch migration complex subunit RuvA (201 aa).

A domain I region spans residues 1 to 63 (MIEYVRGELA…EDAYVLYGFA (63 aa)). Residues 64–142 (DKQEREIFLL…TMGATVAGGS (79 aa)) form a domain II region. A flexible linker region spans residues 143 to 151 (ASAGMLLQS). The domain III stretch occupies residues 152-201 (ASVEVQEEAVAALTMLGFAAAPSQKVVLAILKEEPDAPVEKVIKLALKRL).

This sequence belongs to the RuvA family. Homotetramer. Forms an RuvA(8)-RuvB(12)-Holliday junction (HJ) complex. HJ DNA is sandwiched between 2 RuvA tetramers; dsDNA enters through RuvA and exits via RuvB. An RuvB hexamer assembles on each DNA strand where it exits the tetramer. Each RuvB hexamer is contacted by two RuvA subunits (via domain III) on 2 adjacent RuvB subunits; this complex drives branch migration. In the full resolvosome a probable DNA-RuvA(4)-RuvB(12)-RuvC(2) complex forms which resolves the HJ.

The protein resides in the cytoplasm. Its function is as follows. The RuvA-RuvB-RuvC complex processes Holliday junction (HJ) DNA during genetic recombination and DNA repair, while the RuvA-RuvB complex plays an important role in the rescue of blocked DNA replication forks via replication fork reversal (RFR). RuvA specifically binds to HJ cruciform DNA, conferring on it an open structure. The RuvB hexamer acts as an ATP-dependent pump, pulling dsDNA into and through the RuvAB complex. HJ branch migration allows RuvC to scan DNA until it finds its consensus sequence, where it cleaves and resolves the cruciform DNA. This chain is Holliday junction branch migration complex subunit RuvA, found in Bacteroides thetaiotaomicron (strain ATCC 29148 / DSM 2079 / JCM 5827 / CCUG 10774 / NCTC 10582 / VPI-5482 / E50).